A 470-amino-acid polypeptide reads, in one-letter code: Uronate isomerase (470 aa).

It belongs to the metallo-dependent hydrolases superfamily. Uronate isomerase family.

It carries out the reaction D-glucuronate = D-fructuronate. The enzyme catalyses aldehydo-D-galacturonate = keto-D-tagaturonate. It participates in carbohydrate metabolism; pentose and glucuronate interconversion. In Salmonella paratyphi A (strain ATCC 9150 / SARB42), this protein is Uronate isomerase.